Reading from the N-terminus, the 83-residue chain is Retinal cone rhodopsin-sensitive cGMP 3',5'-cyclic phosphodiesterase subunit gamma (83 aa).

The segment covering methionine 1–threonine 17 has biased composition (polar residues). Residues methionine 1–proline 51 are disordered. Over residues glycine 22–valine 43 the composition is skewed to basic residues.

This sequence belongs to the rod/cone cGMP-PDE gamma subunit family. As to quaternary structure, tetramer composed of two catalytic chains (alpha and beta), and two inhibitory chains (gamma).

It catalyses the reaction 3',5'-cyclic GMP + H2O = GMP + H(+). Functionally, participates in processes of transmission and amplification of the visual signal. cGMP-PDEs are the effector molecules in G-protein-mediated phototransduction in vertebrate rods and cones. In Bos taurus (Bovine), this protein is Retinal cone rhodopsin-sensitive cGMP 3',5'-cyclic phosphodiesterase subunit gamma (PDE6H).